Consider the following 203-residue polypeptide: Recombination protein RecR (203 aa).

A C4-type zinc finger spans residues C58 to C73. The region spanning S81–P177 is the Toprim domain.

It belongs to the RecR family.

Functionally, may play a role in DNA repair. It seems to be involved in an RecBC-independent recombinational process of DNA repair. It may act with RecF and RecO. The polypeptide is Recombination protein RecR (Orientia tsutsugamushi (strain Boryong) (Rickettsia tsutsugamushi)).